Consider the following 155-residue polypeptide: Fibroblast growth factor 1 (155 aa).

Ala2 carries the N-acetylalanine modification. A propeptide spanning residues 2 to 15 (AEGEITTFSALTER) is cleaved from the precursor. Asn33 serves as a coordination point for heparin. The interval 127–143 (KKNGSCKRGPRTHYGQK) is heparin-binding.

Belongs to the heparin-binding growth factors family. In terms of assembly, monomer. Homodimer. Interacts with FGFR1, FGFR2, FGFR3 and FGFR4. Affinity between fibroblast growth factors (FGFs) and their receptors is increased by heparan sulfate glycosaminoglycans that function as coreceptors. Found in a complex with FGFBP1, FGF1 and FGF2. Interacts with FGFBP1. Part of a Cu(2+)-dependent multiprotein aggregate containing FGF1, S100A13 and SYT1. Interacts with SYT1. Interacts with S100A13. Interacts with LRRC59. Interacts with CSNKA, CSNKB and FIBP. While binding with LRRC59, CSNKA and FIBP seem mutually exclusive, CSNKB and FIBP may cooperatively interact with FGF1. Forms a ternary complex with FGFR1 and ITGAV:ITGB3 and induces the recruitment of PTPN11 to the complex. In the nucleus, phosphorylated by PKC/PRKCD.

The protein resides in the secreted. The protein localises to the cytoplasm. Its subcellular location is the cell cortex. It localises to the cytosol. It is found in the nucleus. Functionally, plays an important role in the regulation of cell survival, cell division, angiogenesis, cell differentiation and cell migration. Functions as a potent mitogen in vitro. Acts as a ligand for FGFR1 and integrins. Binds to FGFR1 in the presence of heparin leading to FGFR1 dimerization and activation via sequential autophosphorylation on tyrosine residues which act as docking sites for interacting proteins, leading to the activation of several signaling cascades. Binds to integrin ITGAV:ITGB3. Its binding to integrin, subsequent ternary complex formation with integrin and FGFR1, and the recruitment of PTPN11 to the complex are essential for FGF1 signaling. Induces the phosphorylation and activation of FGFR1, FRS2, MAPK3/ERK1, MAPK1/ERK2 and AKT1. Can induce angiogenesis. The chain is Fibroblast growth factor 1 (FGF1) from Mesocricetus auratus (Golden hamster).